The sequence spans 1220 residues: MGDMANNSVVYGGVKNSLKEANHDGDFGITLAAVRALMELRSTDALRKILESYGDVYGICTKLKTSPNEGLRGNPADLERREAVFGKNFIPPKKPKTFLQLVWEALQDVTLIILEIAAIVSLGLSFYQPPEGDNALCGEVSVGEEEGEGETGWIEGAAILLSVVCVVLVTAFNDWSKEKQFRGLQSRIEQEQKFTVIRGGQVIQIPVSDITVGDIAQVKYGDLLPADGILIQGNDLKIDESSLTGESDHVKKSLDKDPLLLSGTHVMEGSGRMVVTAVGVNSQTGIIFTLLGAGGEEEEKKDEKKKEKKNKKQDGAIENRNKAKAQDGEPMEMQPLKSEEGGDGDEKDKKKANLPKKEKSVLQGKLTKLAVQIGKAGLLMSAITVIILVLYFLIDTFWVQKRPWLAECTPIYIQYFVKFFIIGVTVLVVAVPEGLPLPVTISLAYSVNEMMKDNNLVRHLDACETMGNATAICSDKTGTLTMNRMAVVQAYINEKHYKKVPEPEPYPPNILSYLVTGISVNCAYTSKILPPEEEGGLPRIVGNKTECALLGPLLDLKQDYQDVRNEIPEEALYKVYTFQSVRKSMSTVLKNSDGSFRIFSKGASEIILKKCFKILSANGEAKVFRPRDRDDIVKTVIEPMASEGLRTICLAFRDFPAGEPEPEWDNENDIVTGLTCIAVVGIEDPGRPEVADAIKKCQRAGITVEVVTGDNINTARAIATKCGILHPGEDFLCLEGKDFNRRIRNEKGEIEQESIDKIWPKLRVLARSSPTDKHTLVKGIIDSTVSEQRQVVAVTGDGTNDGPALKKADGGFAMGIAGTDVAKEASDIILTDDNFTSIVKAVMWGRNVYDSISKFLQFQLTVNVVAVIVAFTGACITQDSPLKAVQMLWVNLIMDTLASLALATEPPTESLLLGKPYGRNKPLISRTMMKNILGHAFYQLVVVFTLLLAGEKFFDIDSGRNAPLHAPPSEHYTIVFNIFVLMQLFNEINARKIHGERNVFEGIFNNAIFCTIVLGTFVVQIIIVQFAGKPFSCSELSVEQWLWSIFLGMGTLLWGQLISTIPTSRLKFQKEVVHGTQKREIGEEELAEDVEEIVHAERELRRWQILWFRGLNRIQTQIRVVNAFRSSLYEGLEKPESRSSIHNFMTHPEFRIEDSEPHIPLIDDTDAEDDAPTKRNSSPPPSPNKNNNLVDSGIHLTIEMNKSATSSSPGSPLHSLETSL.

G2 bears the N-acetylglycine mark. At 2 to 105 (GDMANNSVVY…KTFLQLVWEA (104 aa)) the chain is on the cytoplasmic side. Phosphoserine is present on residues S8 and S17. Residues 106–126 (LQDVTLIILEIAAIVSLGLSF) form a helical membrane-spanning segment. Topologically, residues 127–154 (YQPPEGDNALCGEVSVGEEEGEGETGWI) are extracellular. A helical transmembrane segment spans residues 155–175 (EGAAILLSVVCVVLVTAFNDW). Topologically, residues 176 to 366 (SKEKQFRGLQ…KEKSVLQGKL (191 aa)) are cytoplasmic. The segment at 297–356 (EEEKKDEKKKEKKNKKQDGAIENRNKAKAQDGEPMEMQPLKSEEGGDGDEKDKKKANLPK) is disordered. Basic and acidic residues-rich tracts occupy residues 312–327 (KQDG…KAQD) and 337–356 (KSEE…NLPK). S338 is subject to Phosphoserine. Residues 367 to 386 (TKLAVQIGKAGLLMSAITVI) traverse the membrane as a helical segment. Residues 387-418 (ILVLYFLIDTFWVQKRPWLAECTPIYIQYFVK) are Extracellular-facing. Residues 419-439 (FFIIGVTVLVVAVPEGLPLPV) form a helical membrane-spanning segment. The Cytoplasmic portion of the chain corresponds to 440-855 (TISLAYSVNE…RNVYDSISKF (416 aa)). D475 acts as the 4-aspartylphosphate intermediate in catalysis. Residues D475, T477, and D797 each contribute to the Mg(2+) site. A helical transmembrane segment spans residues 856–876 (LQFQLTVNVVAVIVAFTGACI). Residues 877–882 (TQDSPL) lie on the Extracellular side of the membrane. A helical membrane pass occupies residues 883-903 (KAVQMLWVNLIMDTLASLALA). At 904-927 (TEPPTESLLLGKPYGRNKPLISRT) the chain is on the cytoplasmic side. Residues 928 to 948 (MMKNILGHAFYQLVVVFTLLL) traverse the membrane as a helical segment. Topologically, residues 949–971 (AGEKFFDIDSGRNAPLHAPPSEH) are extracellular. Residues 972–991 (YTIVFNIFVLMQLFNEINAR) traverse the membrane as a helical segment. Residues 992–1005 (KIHGERNVFEGIFN) lie on the Cytoplasmic side of the membrane. The helical transmembrane segment at 1006-1027 (NAIFCTIVLGTFVVQIIIVQFA) threads the bilayer. At 1028-1039 (GKPFSCSELSVE) the chain is on the extracellular side. Residues 1040–1060 (QWLWSIFLGMGTLLWGQLIST) form a helical membrane-spanning segment. Residues 1061-1220 (IPTSRLKFQK…SPLHSLETSL (160 aa)) are Cytoplasmic-facing. The tract at residues 1100–1117 (LRRWQILWFRGLNRIQTQ) is calmodulin-binding subdomain A. At T1116 the chain carries Phosphothreonine; by PKC. The segment at 1118–1220 (IRVVNAFRSS…SPLHSLETSL (103 aa)) is required for basolateral membrane targeting. S1140 and S1155 each carry phosphoserine. Residues 1160 to 1220 (PLIDDTDAED…SPLHSLETSL (61 aa)) form a disordered region. T1165 carries the phosphothreonine modification. S1177 carries the phosphoserine; by PKA modification. A phosphoserine mark is found at S1178 and S1182. Over residues 1200–1220 (MNKSATSSSPGSPLHSLETSL) the composition is skewed to polar residues.

Belongs to the cation transport ATPase (P-type) (TC 3.A.3) family. Type IIB subfamily. As to quaternary structure, monomer. Dimer. Oligomer. Calmodulin binding. Interacts with PDZD11. Interacts with SLC35G1 and STIM1. Interacts with YWHAE; interacts with the monomeric and dimeric forms of the YWHAE but prefer the monomer form; this interaction inhibits calcium-transporting ATPase activity. Interacts with NPTN; this interaction stabilizes ATP2B1 and increases ATPase activity; this interaction controls T cell calcium homeostasis following T cell activation. Interacts with EPB41; regulates small intestinal calcium absorption through regulation of membrane expression of ATP2B1. As to expression, isoform B is ubiquitously expressed and is the most predominant isoform. Isoform C is expressed at much lower levels in all tissues tested, but liver, while isoform A is found only in aorta, brain and stomach.

The protein resides in the cell membrane. Its subcellular location is the basolateral cell membrane. It is found in the synapse. The protein localises to the presynaptic cell membrane. It localises to the cytoplasmic vesicle. The protein resides in the secretory vesicle. Its subcellular location is the synaptic vesicle membrane. It catalyses the reaction Ca(2+)(in) + ATP + H2O = Ca(2+)(out) + ADP + phosphate + H(+). Functionally, catalyzes the hydrolysis of ATP coupled with the transport of calcium from the cytoplasm to the extracellular space thereby maintaining intracellular calcium homeostasis. Plays a role in blood pressure regulation through regulation of intracellular calcium concentration and nitric oxide production leading to regulation of vascular smooth muscle cells vasoconstriction. Positively regulates bone mineralization through absorption of calcium from the intestine. Plays dual roles in osteoclast differentiation and survival by regulating RANKL-induced calcium oscillations in preosteoclasts and mediating calcium extrusion in mature osteoclasts. Regulates insulin sensitivity through calcium/calmodulin signaling pathway by regulating AKT1 activation and NOS3 activation in endothelial cells. May play a role in synaptic transmission by modulating calcium and proton dynamics at the synaptic vesicles. In Oryctolagus cuniculus (Rabbit), this protein is Plasma membrane calcium-transporting ATPase 1.